A 265-amino-acid polypeptide reads, in one-letter code: Mlc titration factor A (265 aa).

The Zn(2+) site is built by histidine 111, histidine 148, histidine 152, and glutamate 211.

The protein belongs to the MtfA family. In terms of assembly, interacts with Mlc. Requires Zn(2+) as cofactor.

The protein resides in the cytoplasm. Its function is as follows. Involved in the modulation of the activity of the glucose-phosphotransferase system (glucose-PTS). Interacts with the transcriptional repressor Mlc, preventing its interaction with DNA and leading to the modulation of expression of genes regulated by Mlc, including ptsG, which encodes the PTS system glucose-specific EIICB component. Shows zinc-dependent metallopeptidase activity. This Escherichia coli O9:H4 (strain HS) protein is Mlc titration factor A.